The chain runs to 237 residues: Oligoribonuclease, mitochondrial (237 aa).

The N-terminal 25 residues, 1–25 (MLGGSLGSRLLRGVGGSHGRFGARG), are a transit peptide targeting the mitochondrion. In terms of domain architecture, Exonuclease spans 43–207 (MVWVDLEMTG…DDISESIKEL (165 aa)). Mg(2+)-binding residues include D47 and E49. S92 carries the phosphoserine modification. Phosphotyrosine is present on Y122. Residue D147 coordinates Mg(2+). An N6-acetyllysine modification is found at K173. The active site involves H194. D199 contacts Mg(2+).

This sequence belongs to the oligoribonuclease family. In terms of assembly, homodimer. Homotetramer. The cofactor is Mn(2+). Mg(2+) is required as a cofactor. As to expression, highly expressed in the heart and at lower levels in the lymph nodes, brain, lung, liver, spleen and thymus.

It localises to the mitochondrion intermembrane space. The protein localises to the mitochondrion matrix. It is found in the mitochondrion. Its subcellular location is the cytoplasm. The protein resides in the nucleus. Inhibited by adenosine 3',5'-bisphosphate. Its function is as follows. 3'-to-5'exoribonuclease that preferentially degrades DNA and RNA oligonucleotides composed of only two nucleotides. Binds and degrades longer oligonucleotides with a lower affinity. Plays dual roles in mitochondria, scavenging nanoRNAs (small RNA oligonucleotides of &lt;5 nucleotides) that are produced by the degradosome and clearing short RNAs that are generated by RNA processing. Essential for correct initiation of mitochondrial transcription, degrading mitochondrial RNA dinucleotides to prevent RNA-primed transcription at non-canonical sites in the mitochondrial genome. Essential for embryonic development. In terms of biological role, 3'-to-5'exoribonuclease that preferentially degrades DNA and RNA oligonucleotides composed of only two nucleotides. This chain is Oligoribonuclease, mitochondrial (REXO2), found in Homo sapiens (Human).